The chain runs to 266 residues: Probable carboxylesterase Os04g0669500 (266 aa).

Active-site charge relay system residues include S154, D208, and H240.

Belongs to the AB hydrolase superfamily. AB hydrolase 2 family.

Possesses carboxylesterase activity in vitro. This chain is Probable carboxylesterase Os04g0669500, found in Oryza sativa subsp. japonica (Rice).